We begin with the raw amino-acid sequence, 297 residues long: Protease HtpX homolog (297 aa).

Transmembrane regions (helical) follow at residues 14–34 and 39–59; these read VILL…AGYL and YQLG…SMIF. Histidine 143 contacts Zn(2+). Residue glutamate 144 is part of the active site. Histidine 147 provides a ligand contact to Zn(2+). 2 helical membrane-spanning segments follow: residues 158-178 and 193-213; these read IAVA…RMMW and GFGA…PLAA. Glutamate 225 provides a ligand contact to Zn(2+).

This sequence belongs to the peptidase M48B family. Requires Zn(2+) as cofactor.

It is found in the cell membrane. In Streptococcus equi subsp. equi (strain 4047), this protein is Protease HtpX homolog.